The primary structure comprises 360 residues: Peptide chain release factor 1 (360 aa).

Gln-235 is modified (N5-methylglutamine).

The protein belongs to the prokaryotic/mitochondrial release factor family. Methylated by PrmC. Methylation increases the termination efficiency of RF1.

The protein localises to the cytoplasm. Its function is as follows. Peptide chain release factor 1 directs the termination of translation in response to the peptide chain termination codons UAG and UAA. In Paraburkholderia phymatum (strain DSM 17167 / CIP 108236 / LMG 21445 / STM815) (Burkholderia phymatum), this protein is Peptide chain release factor 1.